A 427-amino-acid polypeptide reads, in one-letter code: MRHLGALLFLLGVLGALAEICEIPEVDSHLVEKLGQHLLPWMDRLSLEHLNPSIYVDLRLSSLQAGTKEELYLHSLKLGYQQCLLGSAFSEDDGDCQGKPSMGQLALYLLALRANCEFVRGHKGDKLVSQLKRFLEDEKRAIGHDHKGHPHTSYYQYGLGILALCLHQKRVHDSVVDKLLYALEPFHQGHHSVDTAAMAGLAFTCLKRSNFNPGRRQRITMAVRTVREKILKAQTPEGHFGNVYSTPLALQFLMTSPMPGAELGTACLKARVALFASLQDGAFQNALMISQLLPVLNHKTYIDLIFPDCLAPRVMLEPAAETIPQAQEIISVTLQVLSLLPPYRQSISVLAGSTVEDVLKKAHELGGFTYETQASLSGPYLISVMGKAAGEREFWQLLRDPNTPLLQGIADYRPKDGETIELRLVSW.

The N-terminal stretch at 1-18 (MRHLGALLFLLGVLGALA) is a signal peptide. Disulfide bonds link C21-C267, C116-C309, and C165-C205. Cob(II)alamin-binding positions include Q104, 152-156 (TSYYQ), H190, 190-194 (HHSVD), N242, S245, Q291, and 395-397 (WQL).

Belongs to the eukaryotic cobalamin transport proteins family. In terms of assembly, interacts with CD320 (via LDL-receptor class A domains).

The protein localises to the secreted. Primary vitamin B12-binding and transport protein. Delivers cobalamin to cells. This is Transcobalamin-2 (TCN2) from Pongo abelii (Sumatran orangutan).